A 108-amino-acid polypeptide reads, in one-letter code: Transcription factor AmrZ (108 aa).

In terms of biological role, functions both as a transcriptional activator and a repressor of multiple genes encoding virulence factors as well as genes involved in environmental adaptation. Represses genes involved in iron homeostasis. Modulates intracellular levels of c-di-GMP which in turn regulates swimming motility and biofilm formation. The polypeptide is Transcription factor AmrZ (Pseudomonas ogarae (strain DSM 112162 / CECT 30235 / F113)).